Consider the following 342-residue polypeptide: GTP 3',8-cyclase (342 aa).

The Radical SAM core domain maps to 18-247 (GFSRRFYYLR…QLRGADDGPA (230 aa)). Arginine 27 serves as a coordination point for GTP. [4Fe-4S] cluster contacts are provided by cysteine 34 and cysteine 38. An S-adenosyl-L-methionine-binding site is contributed by tyrosine 40. Residue cysteine 41 coordinates [4Fe-4S] cluster. Residue arginine 81 participates in GTP binding. Position 85 (glycine 85) interacts with S-adenosyl-L-methionine. Threonine 112 is a GTP binding site. Serine 136 provides a ligand contact to S-adenosyl-L-methionine. Lysine 173 is a GTP binding site. Methionine 207 contacts S-adenosyl-L-methionine. Residues cysteine 270 and cysteine 273 each contribute to the [4Fe-4S] cluster site. 275 to 277 (RLR) contacts GTP. Cysteine 287 contributes to the [4Fe-4S] cluster binding site.

It belongs to the radical SAM superfamily. MoaA family. In terms of assembly, monomer and homodimer. It depends on [4Fe-4S] cluster as a cofactor.

The enzyme catalyses GTP + AH2 + S-adenosyl-L-methionine = (8S)-3',8-cyclo-7,8-dihydroguanosine 5'-triphosphate + 5'-deoxyadenosine + L-methionine + A + H(+). Its pathway is cofactor biosynthesis; molybdopterin biosynthesis. Its function is as follows. Catalyzes the cyclization of GTP to (8S)-3',8-cyclo-7,8-dihydroguanosine 5'-triphosphate. The sequence is that of GTP 3',8-cyclase from Aeromonas hydrophila subsp. hydrophila (strain ATCC 7966 / DSM 30187 / BCRC 13018 / CCUG 14551 / JCM 1027 / KCTC 2358 / NCIMB 9240 / NCTC 8049).